A 511-amino-acid chain; its full sequence is uncharacterized protein (511 aa).

Residues 59-79 (VPVAANDDQPDGSRQSVRGRQ) are disordered.

It belongs to the transposase 25 family.

This is an uncharacterized protein from Sinorhizobium fredii (strain NBRC 101917 / NGR234).